The sequence spans 252 residues: MAAKDRIQAIKQMVANDKKVTVSNLSGIFQVTEETIRRDLEKLEDEGFLTRTYGGAVLNTAMLTENIHFYKRASSFYEEKQLIARKALPFIDNKTTMAADSSSTVMELLKLLQDRSGLTLLTNSAEAIHVLAQSEIKVVSTGGELNKNTLSLQGRITKEIIRRYHVDIMVMSCKGLDINSGALDSNEAEAEIKKTMIRQATEVALLVDHSKFDRKAFVQLADFSHINYIITDKSPGAEWIAFCKDNNIQLVW.

The HTH deoR-type domain maps to 3-58; it reads AKDRIQAIKQMVANDKKVTVSNLSGIFQVTEETIRRDLEKLEDEGFLTRTYGGAVL. The H-T-H motif DNA-binding region spans 20–39; the sequence is VTVSNLSGIFQVTEETIRRD.

This is an uncharacterized protein from Escherichia coli (strain K12).